The primary structure comprises 121 residues: Small ribosomal subunit protein uS13 (121 aa).

The segment at 91-121 (HRRGLPVRGQKTKNNARTRKGPVKTVANKKK) is disordered.

Belongs to the universal ribosomal protein uS13 family. As to quaternary structure, part of the 30S ribosomal subunit. Forms a loose heterodimer with protein S19. Forms two bridges to the 50S subunit in the 70S ribosome.

Its function is as follows. Located at the top of the head of the 30S subunit, it contacts several helices of the 16S rRNA. In the 70S ribosome it contacts the 23S rRNA (bridge B1a) and protein L5 of the 50S subunit (bridge B1b), connecting the 2 subunits; these bridges are implicated in subunit movement. Contacts the tRNAs in the A and P-sites. The polypeptide is Small ribosomal subunit protein uS13 (Staphylococcus epidermidis (strain ATCC 35984 / DSM 28319 / BCRC 17069 / CCUG 31568 / BM 3577 / RP62A)).